Here is a 581-residue protein sequence, read N- to C-terminus: Rhodanese-like domain-containing protein 6 (581 aa).

In terms of domain architecture, Rhodanese spans 158–258 (ENKELVLLDA…YLEQFPSGGF (101 aa)). Catalysis depends on Cys-216, which acts as the Cysteine persulfide intermediate.

This Arabidopsis thaliana (Mouse-ear cress) protein is Rhodanese-like domain-containing protein 6 (STR6).